The sequence spans 328 residues: Nicotianamine synthase 1 (328 aa).

Belongs to the nicotianamine synthase (NAS)-like family. In terms of tissue distribution, in roots but not in leaves.

The enzyme catalyses 3 S-adenosyl-L-methionine = nicotianamine + 3 S-methyl-5'-thioadenosine + 3 H(+). In terms of biological role, synthesizes nicotianamine, a polyamine that is the first intermediate in the synthesis of the phytosiderophores of the mugineic acid type found in gramineae which serves as a sensor for the physiological iron status within the plant, and/or might be involved in the transport of iron. This Hordeum vulgare (Barley) protein is Nicotianamine synthase 1 (NAS1).